A 108-amino-acid chain; its full sequence is uncharacterized protein (108 aa).

Intrachain disulfides connect Cys44–Cys82, Cys60–Cys78, and Cys63–Cys91.

It belongs to the arthropod CHH/MIH/GIH/VIH hormone family.

This is an uncharacterized protein from Caenorhabditis elegans.